The primary structure comprises 240 residues: Mitochondrial inner membrane protease ATP23 (240 aa).

Residue His-140 participates in a divalent metal cation binding. Glu-141 is an active-site residue. An a divalent metal cation-binding site is contributed by His-144.

Belongs to the peptidase M76 family.

The protein localises to the mitochondrion inner membrane. In terms of biological role, has a dual role in the assembly of mitochondrial ATPase. Acts as a protease that removes N-terminal residues of mitochondrial ATPase CF(0) subunit 6 at the intermembrane space side. Also involved in the correct assembly of the membrane-embedded ATPase CF(0) particle, probably mediating association of subunit 6 with the subunit 9 ring. This Scheffersomyces stipitis (strain ATCC 58785 / CBS 6054 / NBRC 10063 / NRRL Y-11545) (Yeast) protein is Mitochondrial inner membrane protease ATP23 (ATP23).